The sequence spans 171 residues: Lipoprotein signal peptidase (171 aa).

3 helical membrane-spanning segments follow: residues 8–28, 64–84, and 96–118; these read SFLW…YIVV, WQQY…VYFL, and SAYA…NGFV. Residues aspartate 120 and aspartate 138 contribute to the active site. Residues 133-153 form a helical membrane-spanning segment; it reads VFNIADIAICIGAGLLALDAF.

This sequence belongs to the peptidase A8 family.

The protein resides in the cell inner membrane. It catalyses the reaction Release of signal peptides from bacterial membrane prolipoproteins. Hydrolyzes -Xaa-Yaa-Zaa-|-(S,diacylglyceryl)Cys-, in which Xaa is hydrophobic (preferably Leu), and Yaa (Ala or Ser) and Zaa (Gly or Ala) have small, neutral side chains.. It participates in protein modification; lipoprotein biosynthesis (signal peptide cleavage). Functionally, this protein specifically catalyzes the removal of signal peptides from prolipoproteins. In Haemophilus influenzae (strain 86-028NP), this protein is Lipoprotein signal peptidase.